The sequence spans 351 residues: S-adenosylmethionine:tRNA ribosyltransferase-isomerase (351 aa).

The protein belongs to the QueA family. Monomer.

Its subcellular location is the cytoplasm. The catalysed reaction is 7-aminomethyl-7-carbaguanosine(34) in tRNA + S-adenosyl-L-methionine = epoxyqueuosine(34) in tRNA + adenine + L-methionine + 2 H(+). Its pathway is tRNA modification; tRNA-queuosine biosynthesis. Transfers and isomerizes the ribose moiety from AdoMet to the 7-aminomethyl group of 7-deazaguanine (preQ1-tRNA) to give epoxyqueuosine (oQ-tRNA). This chain is S-adenosylmethionine:tRNA ribosyltransferase-isomerase, found in Fusobacterium nucleatum subsp. nucleatum (strain ATCC 25586 / DSM 15643 / BCRC 10681 / CIP 101130 / JCM 8532 / KCTC 2640 / LMG 13131 / VPI 4355).